Consider the following 148-residue polypeptide: Transcriptional regulator MraZ (148 aa).

SpoVT-AbrB domains lie at 5-51 and 80-123; these read VSIL…PEPN and AETL…NAEE.

It belongs to the MraZ family. As to quaternary structure, forms oligomers.

Its subcellular location is the cytoplasm. The protein localises to the nucleoid. The sequence is that of Transcriptional regulator MraZ from Chromobacterium violaceum (strain ATCC 12472 / DSM 30191 / JCM 1249 / CCUG 213 / NBRC 12614 / NCIMB 9131 / NCTC 9757 / MK).